Here is a 114-residue protein sequence, read N- to C-terminus: Anti-sigma-B factor antagonist (114 aa).

Residues 4–114 (SIEIKERDTD…VEGEMNGNNA (111 aa)) enclose the STAS domain. Position 58 is a phosphoserine (Ser-58).

This sequence belongs to the anti-sigma-factor antagonist family. In terms of processing, phosphorylated by RsbW on a serine residue.

Its function is as follows. Positive regulator of sigma-B activity. Non-phosphorylated RsbV binds to RsbW, preventing its association with sigma-B. When phosphorylated, releases RsbW, which is then free to complex with and inactivate sigma-B. The sequence is that of Anti-sigma-B factor antagonist (rsbV) from Listeria innocua serovar 6a (strain ATCC BAA-680 / CLIP 11262).